The following is a 727-amino-acid chain: C-terminal-binding protein 1 (727 aa).

The THAP-type zinc finger occupies 5–60 (CGFPNCKFRSRYRGLEDNRHFYRIPKRPLILRQRWLTAIGRTEETVVSQLRICSAH). The segment at 64 to 158 (GEKKEGDIPV…HPPVLPDPQQ (95 aa)) is disordered. Residues 77-94 (TVDKQIKIELPPKESKNS) show a composition bias toward basic and acidic residues. Residues tyrosine 251, 331 to 336 (LGCGRV), aspartate 355, 388 to 394 (CNLGDET), 415 to 417 (TSH), aspartate 441, and 467 to 470 (HSAW) contribute to the NAD(+) site. Positions 587–613 (ANAQRGSPANRSSRSSPSPHTNKSSVS) are enriched in low complexity. Disordered regions lie at residues 587 to 629 (ANAQ…SPAA) and 652 to 681 (APNG…GDEN).

The protein belongs to the D-isomer specific 2-hydroxyacid dehydrogenase family. Homodimer.

Binds DNA and represses gene expression. Plays a role in regulation of life span, possibly by regulating transcription of genes important for lipid metabolism. The protein is C-terminal-binding protein 1 of Caenorhabditis elegans.